We begin with the raw amino-acid sequence, 203 residues long: Inosine triphosphate pyrophosphatase (203 aa).

10–15 (TGNQNK) lines the ITP pocket. Glu40 is a binding site for Mg(2+). ITP contacts are provided by residues Lys52, 68 to 69 (DT), Lys85, 145 to 148 (FGWD), Lys168, and 173 to 174 (HR).

The protein belongs to the HAM1 NTPase family. As to quaternary structure, homodimer. The cofactor is Mg(2+). Requires Mn(2+) as cofactor.

The protein resides in the cytoplasm. The enzyme catalyses ITP + H2O = IMP + diphosphate + H(+). The catalysed reaction is dITP + H2O = dIMP + diphosphate + H(+). It catalyses the reaction XTP + H2O = XMP + diphosphate + H(+). Functionally, pyrophosphatase that hydrolyzes non-canonical purine nucleotides such as inosine triphosphate (ITP), deoxyinosine triphosphate (dITP) or xanthosine 5'-triphosphate (XTP) to their respective monophosphate derivatives. The enzyme does not distinguish between the deoxy- and ribose forms. Probably excludes non-canonical purines from RNA and DNA precursor pools, thus preventing their incorporation into RNA and DNA and avoiding chromosomal lesions. This chain is Inosine triphosphate pyrophosphatase, found in Nematostella vectensis (Starlet sea anemone).